The sequence spans 540 residues: Putative cysteine ligase BshC (540 aa).

Residues 457-477 (EKNRAFIQGQIAFLKERMERE) adopt a coiled-coil conformation.

The protein belongs to the BshC family.

Involved in bacillithiol (BSH) biosynthesis. May catalyze the last step of the pathway, the addition of cysteine to glucosamine malate (GlcN-Mal) to generate BSH. This is Putative cysteine ligase BshC from Shouchella clausii (strain KSM-K16) (Alkalihalobacillus clausii).